The primary structure comprises 169 residues: MFTSAHANRSAQASASAGHYAHRSGEQTANGLISEIVYREDQPMMTQLLLLPLLQQLGQQSRWQLWLTPQQKLSREWVQSAGLPLSKVMQISQLSPCHTVDSMIRALRTGNYSVVICWLTEELTAEEHERLVNAAQEGCAMGFIMRPVRNQGTLGRQLSGLKIHSNLYH.

Positions 1–15 (MFTSAHANRSAQASA) are enriched in polar residues. A disordered region spans residues 1–22 (MFTSAHANRSAQASASAGHYAH). Residues 106-112 (ALRTGNY) form a ftsZ binding region. Positions 162 to 169 (KIHSNLYH) are lon protease binding.

It belongs to the SulA family. In terms of assembly, interacts with FtsZ. Post-translationally, is rapidly cleaved and degraded by the Lon protease once DNA damage is repaired.

In terms of biological role, component of the SOS system and an inhibitor of cell division. Accumulation of SulA causes rapid cessation of cell division and the appearance of long, non-septate filaments. In the presence of GTP, binds a polymerization-competent form of FtsZ in a 1:1 ratio, thus inhibiting FtsZ polymerization and therefore preventing it from participating in the assembly of the Z ring. This mechanism prevents the premature segregation of damaged DNA to daughter cells during cell division. The sequence is that of Cell division inhibitor SulA from Klebsiella pneumoniae (strain 342).